Consider the following 177-residue polypeptide: Protein PrsK (177 aa).

The signal sequence occupies residues M1–A21.

The protein localises to the fimbrium. The sequence is that of Protein PrsK (prsK) from Escherichia coli.